The sequence spans 241 residues: Lipoprotein MxiJ (241 aa).

The signal sequence occupies residues 1–17 (MIRYKGFILFLLLMLIG). A lipid anchor (N-palmitoyl cysteine) is attached at cysteine 18. The S-diacylglycerol cysteine moiety is linked to residue cysteine 18.

It belongs to the YscJ lipoprotein family.

Its subcellular location is the cell outer membrane. In terms of biological role, involved in the secretion of the Ipa antigens. The sequence is that of Lipoprotein MxiJ (mxiJ) from Shigella sonnei.